Consider the following 605-residue polypeptide: Inactive LRR receptor-like serine/threonine-protein kinase BIR2 (605 aa).

Residues 1-28 form the signal peptide; the sequence is MKEIGSKPRKLLPLCFIIFLCFCSSVMA. Residues 29-229 lie on the Extracellular side of the membrane; it reads ADEDDIRCLR…CGGLSKKNLG (201 aa). Asparagine 58 carries an N-linked (GlcNAc...) asparagine glycan. 4 LRR repeats span residues 101 to 125, 127 to 150, 152 to 173, and 174 to 197; these read CASL…LCNW, PFLV…LAKC, FVNS…QFSA, and LGRL…FFSS. Residues 230-250 traverse the membrane as a helical segment; it reads IIIAAGVFGAAASMLLAFGIW. Residues 251-605 lie on the Cytoplasmic side of the membrane; that stretch reads WYYHLKWTRR…IFDTQENEKV (355 aa). Phosphoserine; by BAK1 is present on serine 271. Threonine 283 is subject to Phosphothreonine; by BAK1. Serine 286 is subject to Phosphoserine; by BAK1. At threonine 304 the chain carries Phosphothreonine; by BAK1. One can recognise a Protein kinase domain in the interval 307–578; it reads FNSENIIVST…FQAYQSLKAI (272 aa). 313–321 contributes to the ATP binding site; it reads IVSTRTGTT. Serine 330 carries the post-translational modification Phosphoserine; by BAK1. Position 335 (lysine 335) interacts with ATP. A Phosphoserine; by BAK1 modification is found at serine 389. Residue threonine 402 is modified to Phosphothreonine. A phosphoserine; by BAK1 mark is found at serine 448 and serine 462. Position 466 is a phosphothreonine; by BAK1 (threonine 466). At tyrosine 479 the chain carries Phosphotyrosine. Threonine 482 carries the phosphothreonine modification. Serine 486 carries the phosphoserine modification. Phosphothreonine; by BAK1 is present on threonine 533.

The protein belongs to the protein kinase superfamily. Ser/Thr protein kinase family. In terms of assembly, interacts constitutively with BAK1, when phosphorylated, thereby preventing interaction with the ligand-binding LRR-RLK FLS2. Upon infection, pathogen-associated molecular patterns (PAMP) perception leads to BIR2 release from the BAK1 complex and enables the recruitment of BAK1 into the FLS2 complex. In terms of processing, phosphorylated by BAK1, this interacts promotes interaction with BAK1.

It localises to the cell membrane. Its function is as follows. Pseudokinases lacking protein kinase activity and unable to bind ATP-analogs. Negative regulator of pathogen-associated molecular patterns- (PAMP-) triggered immunity by limiting BAK1-receptor complex formation in the absence of ligands. The sequence is that of Inactive LRR receptor-like serine/threonine-protein kinase BIR2 from Arabidopsis thaliana (Mouse-ear cress).